Reading from the N-terminus, the 98-residue chain is Carboxysome shell protein CsoS1C (98 aa).

The BMC domain occupies 8–93 (ALGMIETRGL…VHSEVENILP (86 aa)).

Belongs to the bacterial microcompartments protein family. CsoS1 subfamily. As to quaternary structure, homohexamer with a small central pore. Interacts with the N-terminus (residues 1-136) of RuBisCO (CbbL).

The protein resides in the carboxysome. Functionally, one of shell proteins of the carboxysome, a polyhedral inclusion where RuBisCO (ribulose bisphosphate carboxylase, ccbL-ccbS) is sequestered. Assembles into hexamers which make sheets that form the facets of the polyhedral carboxysome. The shell probably limits the diffusion of CO(2) into and out of the carboxysome. There are estimated to be 2970 CsoS1A/CsoS1C proteins per carboxysome (the proteins differ by only 1 residue). Its function is as follows. Unlike beta-carboxysomes, alpha-carboxysomes (Cb) can form without cargo protein. CsoS2 is essential for Cb formation and is also capable of targeting foreign proteins to the Cb. The Cb shell assembles with the aid of CsoS2; CsoS1A, CsoS1B and CsoS1C form the majority of the shell while CsoS4A and CsoS4B form vertices. CsoS1D forms pseudohexamers that probably control metabolite flux into and out of the shell. The chain is Carboxysome shell protein CsoS1C from Halothiobacillus neapolitanus (strain ATCC 23641 / c2) (Thiobacillus neapolitanus).